A 350-amino-acid polypeptide reads, in one-letter code: MSIPTMQWAQVAEKVGGPLVYKQIPVPKPGPDQILVKIRYSGVCHTDLHAMMGHWPIPVKMPLVGGHEGAGIVVAKGELVHEFEIGDQAGIKWLNGSCGECEFCRQSDDPLCARAQLSGYTVDGTFQQYALGKASHASKIPAGVPLDAAAPVLCAGITVYKGLKEAGVRPGQTVAIVGAGGGLGSLAQQYAKAMGIRVVAVDGGDEKRAMCESLGTETYVDFTKSKDLVADVKAATPDGLGAHAVILLAVSEKPFQQATEYVRSRGTIVAIGLPPDAYLKAPVINTVVRMITIKGSYVGNRQDGVEALDFFARGLIKAPFKTAPLKDLPKIYELMEQGRIAGRYVLEMPE.

8 residues coordinate Zn(2+): Cys44, Thr46, His67, Cys98, Cys101, Cys104, Cys112, and Cys154. The an alcohol site is built by Thr46 and His67. Residue Thr46 coordinates NAD(+). NAD(+) contacts are provided by residues 178–182, Asp202, Lys207, 271–273, and Arg343; these read GAGGG and IGL.

It belongs to the zinc-containing alcohol dehydrogenase family. As to quaternary structure, homotetramer. The cofactor is Zn(2+).

The protein resides in the cytoplasm. It localises to the secreted. It carries out the reaction a primary alcohol + NAD(+) = an aldehyde + NADH + H(+). The catalysed reaction is a secondary alcohol + NAD(+) = a ketone + NADH + H(+). This chain is Alcohol dehydrogenase 1 (alcA), found in Emericella nidulans (strain FGSC A4 / ATCC 38163 / CBS 112.46 / NRRL 194 / M139) (Aspergillus nidulans).